Reading from the N-terminus, the 250-residue chain is tRNA (guanine-N(1)-)-methyltransferase (250 aa).

S-adenosyl-L-methionine-binding positions include G112 and 132–137; that span reads IGDFVL.

It belongs to the RNA methyltransferase TrmD family. As to quaternary structure, homodimer.

Its subcellular location is the cytoplasm. It catalyses the reaction guanosine(37) in tRNA + S-adenosyl-L-methionine = N(1)-methylguanosine(37) in tRNA + S-adenosyl-L-homocysteine + H(+). In terms of biological role, specifically methylates guanosine-37 in various tRNAs. In Marinomonas sp. (strain MWYL1), this protein is tRNA (guanine-N(1)-)-methyltransferase.